The sequence spans 143 residues: NADH-quinone oxidoreductase subunit A (143 aa).

3 helical membrane-spanning segments follow: residues 8–28 (FGNVFAFLALGVVFVAGGYLT), 63–83 (FYVVALIFIIFDVEVVFLYPW), and 93–113 (FALIEALVFAGILVLGLAYAW).

The protein belongs to the complex I subunit 3 family. NDH-1 is composed of 14 different subunits. Subunits NuoA, H, J, K, L, M, N constitute the membrane sector of the complex.

It localises to the cell inner membrane. The catalysed reaction is a quinone + NADH + 5 H(+)(in) = a quinol + NAD(+) + 4 H(+)(out). In terms of biological role, NDH-1 shuttles electrons from NADH, via FMN and iron-sulfur (Fe-S) centers, to quinones in the respiratory chain. The immediate electron acceptor for the enzyme in this species is believed to be a menaquinone. Couples the redox reaction to proton translocation (for every two electrons transferred, four hydrogen ions are translocated across the cytoplasmic membrane), and thus conserves the redox energy in a proton gradient. The polypeptide is NADH-quinone oxidoreductase subunit A (Pelodictyon phaeoclathratiforme (strain DSM 5477 / BU-1)).